The primary structure comprises 61 residues: MDGMFAMPGAAAGAASPQQPKSRFQAFKESPLYTIALNGAFFVAGVAFIQSPLMDMLAPQL.

M1 carries the N-acetylmethionine modification. Over residues 1–15 (MDGMFAMPGAAAGAA) the composition is skewed to low complexity. Positions 1–22 (MDGMFAMPGAAAGAASPQQPKS) are disordered. At 1–31 (MDGMFAMPGAAAGAASPQQPKSRFQAFKESP) the chain is on the cytoplasmic side. A helical transmembrane segment spans residues 32–52 (LYTIALNGAFFVAGVAFIQSP). Residues 53–61 (LMDMLAPQL) are Mitochondrial intermembrane-facing.

It belongs to the Tom6 family. Forms part of the TOM (translocase of outer membrane) complex that consists of at least 7 different proteins (TOM5, TOM6, TOM7, TOM20, TOM22, TOM40 and TOM70).

The protein localises to the mitochondrion outer membrane. Functionally, component of the TOM (translocase of outer membrane) receptor complex responsible for the recognition and translocation of cytosolically synthesized mitochondrial preproteins. TOM6 is involved in assembly and stability of the TOM complex. The sequence is that of Mitochondrial import receptor subunit TOM6 (TOM6) from Saccharomyces cerevisiae (strain ATCC 204508 / S288c) (Baker's yeast).